Here is a 178-residue protein sequence, read N- to C-terminus: Ribosome maturation factor RimP (178 aa).

This sequence belongs to the RimP family.

Its subcellular location is the cytoplasm. Functionally, required for maturation of 30S ribosomal subunits. This is Ribosome maturation factor RimP from Streptococcus pyogenes serotype M4 (strain MGAS10750).